Here is a 132-residue protein sequence, read N- to C-terminus: Large ribosomal subunit protein bL17 (132 aa).

The protein belongs to the bacterial ribosomal protein bL17 family. Part of the 50S ribosomal subunit. Contacts protein L32.

The polypeptide is Large ribosomal subunit protein bL17 (Polaromonas sp. (strain JS666 / ATCC BAA-500)).